Reading from the N-terminus, the 144-residue chain is Large ribosomal subunit protein uL15 (144 aa).

A disordered region spans residues 1-52; it reads MRLNTLSPAEGAKHAPKRVGRGIGSGLGKTAGRGHKGQNSRSGGGVRRGFEG. Residues 21-31 are compositionally biased toward gly residues; sequence RGIGSGLGKTA.

Belongs to the universal ribosomal protein uL15 family. Part of the 50S ribosomal subunit.

Binds to the 23S rRNA. The polypeptide is Large ribosomal subunit protein uL15 (Yersinia pseudotuberculosis serotype O:1b (strain IP 31758)).